The chain runs to 466 residues: Asparagine--tRNA ligase (466 aa).

The protein belongs to the class-II aminoacyl-tRNA synthetase family. As to quaternary structure, homodimer.

The protein resides in the cytoplasm. The catalysed reaction is tRNA(Asn) + L-asparagine + ATP = L-asparaginyl-tRNA(Asn) + AMP + diphosphate + H(+). This Shewanella sp. (strain MR-4) protein is Asparagine--tRNA ligase.